The primary structure comprises 662 residues: Carboxysome assembly protein CsoS2 (662 aa).

The tract at residues 1–227 (MSTSNAQSGR…KRRNAKEAPQ (227 aa)) is N-terminal domain. 3 disordered regions span residues 1-258 (MSTS…SESG), 277-322 (NCDV…TCSA), and 342-419 (PAKS…RGSC). The stretch at 8–27 (SGRAAAIARRNAQVKGKGYT) is one N-repeat 1 repeat. 2 stretches are compositionally biased toward low complexity: residues 28-57 (ASAAPAAPRKPAAPVAEPVVAAAPAPSQPS) and 64-76 (SVAPTATPAASAA). One copy of the N-repeat 2 repeat lies at 58–72 (RSRRKVSVAPTATPA). The segment covering 120–135 (RQAKAEKPTKRSERRT) has biased composition (basic and acidic residues). Residues 141–150 (VASQQPSGRL) are compositionally biased toward polar residues. Residues 147–168 (SGRLQSKAYRKAQAKGKAGQEA) form an N-repeat 3 repeat. 3 stretches are compositionally biased toward low complexity: residues 161–170 (KGKAGQEAFK), 237–247 (GQSVSGTQVGQ), and 289–300 (VTQTQTTRGQVV). M-repeat repeat units follow at residues 228–278 (KVGE…SKNC), 288–338 (KVTQ…KMYC), 388–436 (KVMP…AKAC), 446–491 (KVTA…TEQF), and 496–550 (VDEQ…AMVC). Residues 228-559 (KVGESQTLHG…CDSTNAAAPG (332 aa)) are middle region. Residues 391–404 (PSQTAKGNTTTGSQ) show a composition bias toward polar residues. The segment at 560 to 631 (ESDFPAMIGQ…SPMGASQYRP (72 aa)) is C-terminal domain. The stretch at 564–572 (PAMIGQAQP) is one C-repeat 1 repeat. Disordered stretches follow at residues 588–607 (KITGDGWDRGSKVTGTDGPW) and 619–662 (AGQS…GARA). The interval 632 to 662 (VNNEVPMSPITGSSGNTDTGAKVTLSGGARA) is C-terminal peptide. Residues 641 to 650 (ITGSSGNTDT) show a composition bias toward polar residues.

Belongs to the CsoS2 family. As to quaternary structure, interacts via its N-terminal repeats with RuBisCO. Interacts with the major shell protein CsoS1. Post-translationally, unlike H.neapolitanus and predictions for P.marinus strain MIT 9313, this protein is not thought to have ribosomal frameshifting.

It is found in the carboxysome. Required for alpha-carboxysome (Cb) assembly, mediates interaction between RuBisCO and the Cb shell. The protein is probably intrinsically disordered. The C-terminal repeats act as the encapsulation signal to target proteins to the Cb; they are necessary and sufficient to target both CsoS2 and foreign proteins to the Cb. The N-terminal repeats of this protein bind simultaneously to both subunits of RuBisCO. Probably also interacts with the major shell proteins (CsoS1); that interaction would increase the local concentration of CsoS2 so that it can condense RuBisCO and full carboxysomes can be formed. In Hydrogenovibrio crunogenus (strain DSM 25203 / XCL-2) (Thiomicrospira crunogena), this protein is Carboxysome assembly protein CsoS2.